A 288-amino-acid chain; its full sequence is Homeobox protein Hox-B4a (288 aa).

The tract at residues 10–136 (SNYVDPKFPP…ASSPASTRKD (127 aa)) is disordered. The segment covering 118-132 (CGQTPHSQGASSPAS) has biased composition (polar residues). The Antp-type hexapeptide motif lies at 139 to 144 (VYPWMK). Residues 160-219 (PKRSRTAYTRQQVLELEKEFHYNRYLTRRRRVEIAHTLCLSERQIKIWFQNRRMKWKKDH) constitute a DNA-binding region (homeobox).

Belongs to the Antp homeobox family. Deformed subfamily.

The protein localises to the nucleus. Its function is as follows. Sequence-specific transcription factor which is part of a developmental regulatory system that provides cells with specific positional identities on the anterior-posterior axis. The protein is Homeobox protein Hox-B4a (hoxb4a) of Takifugu rubripes (Japanese pufferfish).